Consider the following 323-residue polypeptide: Estradiol 17 beta-dehydrogenase 5 (323 aa).

Residues 20-24 and Asp50 contribute to the NADP(+) site; that span reads GFGTY. Tyr55 acts as the Proton donor in catalysis. Residue His117 participates in substrate binding. Residues 166-167, Gln190, 216-221, and 270-280 each bind NADP(+); these read SN, YSALGS, and KSFSEKRIKEN.

This sequence belongs to the aldo/keto reductase family. In terms of assembly, monomer. Three forms are detected, probably due to post-translational modifications. As to expression, mainly found in liver. Also expressed weakly in kidney.

In terms of biological role, active toward androgens, estrogens, and xenobiotic substrates. Also exhibits low 20 alpha-HSD activity. Shows a-stereospecificity in hydrogen transfer between cofactors and substrates (A-specific). Preferentially catalyzes the reduction of 4-androstenedione, 5-alpha-androstane-3,17-dione, androsterone and dehydroepiandrosterone to testosterone, dihydrotestosterone, 5-alpha-androstane-3-alpha,17-beta-diol and 5-androstene-3-beta,17-beta-diol, respectively. The polypeptide is Estradiol 17 beta-dehydrogenase 5 (Akr1c6) (Mus musculus (Mouse)).